The chain runs to 346 residues: Nuclear distribution protein nudE-like 1 (346 aa).

Residues 13–190 (KEEIVYWREL…LAVRERQTNG (178 aa)) adopt a coiled-coil conformation. 2 disordered regions span residues 184-205 (RERQTNGTRKSAPSSPTLDCDK) and 325-346 (YDPPGVLGSRPPSPPGMLPLSV). A compositionally biased stretch (polar residues) spans 188–200 (TNGTRKSAPSSPT). Positions 335–346 (PPSPPGMLPLSV) are enriched in pro residues.

The protein belongs to the nudE family. In terms of processing, phosphorylated in mitosis.

It localises to the cytoplasm. The protein resides in the cytoskeleton. Its subcellular location is the microtubule organizing center. The protein localises to the centrosome. It is found in the spindle. Required for organization of the cellular microtubule array and microtubule anchoring at the centrosome. Positively regulates the activity of the minus-end directed microtubule motor protein dynein. May enhance dynein-mediated microtubule sliding by targeting dynein to the microtubule plus end. Positively regulates lysosome peripheral distribution and ruffled border formation in osteoclasts. The protein is Nuclear distribution protein nudE-like 1 (ndel1) of Xenopus tropicalis (Western clawed frog).